A 76-amino-acid polypeptide reads, in one-letter code: Esculentin-2MT1 (76 aa).

Residues 1–22 (MFTMKKPLLLLFFLGTISLSLC) form the signal peptide. The propeptide occupies 23 to 37 (EEERNADEDDGEKEV). C70 and C76 form a disulfide bridge.

Belongs to the frog skin active peptide (FSAP) family. Esculentin subfamily. In terms of tissue distribution, expressed by the skin glands.

It is found in the secreted. Its function is as follows. Antimicrobial peptide. The polypeptide is Esculentin-2MT1 (Amolops mantzorum (Sichuan torrent frog)).